The sequence spans 323 residues: UPF0612 protein C569.01c (323 aa).

Coiled coils occupy residues 27–63 (IKRY…MKYE) and 131–225 (NEMN…DARS).

It belongs to the UPF0612 family.

The protein is UPF0612 protein C569.01c of Schizosaccharomyces pombe (strain 972 / ATCC 24843) (Fission yeast).